A 134-amino-acid chain; its full sequence is Translation initiation factor 2 subunit beta (134 aa).

Residues methionine 1–glutamate 12 are compositionally biased toward basic and acidic residues. The tract at residues methionine 1–aspartate 28 is disordered.

It belongs to the eIF-2-beta/eIF-5 family. In terms of assembly, heterotrimer composed of an alpha, a beta and a gamma chain.

Functionally, eIF-2 functions in the early steps of protein synthesis by forming a ternary complex with GTP and initiator tRNA. This is Translation initiation factor 2 subunit beta from Haloarcula marismortui (strain ATCC 43049 / DSM 3752 / JCM 8966 / VKM B-1809) (Halobacterium marismortui).